A 202-amino-acid polypeptide reads, in one-letter code: Sterile alpha motif domain-containing protein 10 (202 aa).

Residues 118–184 (WSQQDVCKWL…LQQVLRLQVR (67 aa)) form the SAM domain.

The sequence is that of Sterile alpha motif domain-containing protein 10 (SAMD10) from Homo sapiens (Human).